The following is a 156-amino-acid chain: MKGSVRALCAFLGVGALGSALCVSCTTVCPHAGKAKAEKVECALKGGIFRGTLPAADCPGIDTTVTFNADGTAQKVELALEKKSAPSPLTYRGTWMVREDGIVELSLVSSEQSKAPHEKELYELIDSNSVRYMGAPGAGKPSKEMAPFYVLKKTKK.

Residues 1 to 21 form the signal peptide; sequence MKGSVRALCAFLGVGALGSAL. The N-palmitoyl cysteine moiety is linked to residue Cys-22. Cys-22 carries S-diacylglycerol cysteine lipidation.

The protein resides in the cell membrane. This is 17 kDa lipoprotein (tpp17) from Treponema pallidum (strain Nichols).